The primary structure comprises 376 residues: Fibromodulin (376 aa).

The signal sequence occupies residues 1-18; the sequence is MQWTSLLLLAGLFSLSQA. Q19 carries the post-translational modification Pyrrolidone carboxylic acid. 7 positions are modified to sulfotyrosine: Y20, Y38, Y39, Y45, Y47, Y53, and Y55. One can recognise an LRRNT domain in the interval 67-105; it reads SPSPPDPRDCPQECDCPPNFPTAMYCDNRNLKYLPFVPS. 8 LRR repeats span residues 106 to 127, 130 to 151, 156 to 176, 177 to 198, 201 to 222, 224 to 245, 246 to 266, and 269 to 289; these read RMKY…VFDN, GLLW…RKVF, HLER…PLPR, SLRE…ALEG, NLTA…MRGL, SLIL…LPSA, LEQL…YFRG, and KLLY…ASNT. N127 is a glycosylation site (N-linked (GlcNAc...) (keratan sulfate) asparagine). A glycan (N-linked (GlcNAc...) (keratan sulfate) asparagine) is linked at N166. N201 carries N-linked (GlcNAc...) (keratan sulfate) asparagine glycosylation. N-linked (GlcNAc...) (keratan sulfate) asparagine glycosylation occurs at N291. LRR repeat units lie at residues 294-315 and 316-335; these read SLLE…NTNL and ENLY…SFCT. A disulfide bridge connects residues C334 and C367. N341 is a glycosylation site (N-linked (GlcNAc...) asparagine). The LRR 11 repeat unit spans residues 344-365; it reads KLQVLRLDGNEIKRSAMPADAP.

This sequence belongs to the small leucine-rich proteoglycan (SLRP) family. SLRP class II subfamily. As to quaternary structure, binds to type I and type II collagen. Post-translationally, binds keratan sulfate chains.

The protein localises to the secreted. Its subcellular location is the extracellular space. The protein resides in the extracellular matrix. Its function is as follows. Affects the rate of fibrils formation. May have a primary role in collagen fibrillogenesis. The sequence is that of Fibromodulin (FMOD) from Homo sapiens (Human).